Consider the following 383-residue polypeptide: Na(+)/H(+) antiporter NhaA (383 aa).

A run of 11 helical transmembrane segments spans residues 10-30, 56-76, 91-111, 121-141, 150-170, 174-194, 206-226, 254-274, 289-308, 327-347, and 355-375; these read LIGG…NNSP, LMHW…GLEI, IITP…IYLS, GWAI…ALLG, LLVI…IAIF, SLSL…IICN, VVLG…ATLA, PWII…ISFS, IIWG…LAVF, GISL…VLAF, and AIKI…YIVL.

It belongs to the NhaA Na(+)/H(+) (TC 2.A.33) antiporter family.

The protein resides in the cell inner membrane. It catalyses the reaction Na(+)(in) + 2 H(+)(out) = Na(+)(out) + 2 H(+)(in). Its function is as follows. Na(+)/H(+) antiporter that extrudes sodium in exchange for external protons. In Francisella tularensis subsp. holarctica (strain FTNF002-00 / FTA), this protein is Na(+)/H(+) antiporter NhaA.